Consider the following 116-residue polypeptide: Large ribosomal subunit protein uL18 (116 aa).

It belongs to the universal ribosomal protein uL18 family. In terms of assembly, part of the 50S ribosomal subunit; part of the 5S rRNA/L5/L18/L25 subcomplex. Contacts the 5S and 23S rRNAs.

Functionally, this is one of the proteins that bind and probably mediate the attachment of the 5S RNA into the large ribosomal subunit, where it forms part of the central protuberance. The protein is Large ribosomal subunit protein uL18 of Shewanella baltica (strain OS223).